The chain runs to 470 residues: Nuclear receptor subfamily 0 group B member 1 (470 aa).

Repeat copies occupy residues M1–C67, F68–C133, and F134–C200. A 4 X 67 AA tandem repeats region spans residues M1–V253. 3 consecutive short sequence motifs (LXXLL motif) follow at residues L13–L17, L80–L84, and L146–L150. The 4; truncated repeat unit spans residues F201–V253. The NR LBD domain occupies D205–K469. The short motif at M461–L466 is the AF-2 motif element.

Belongs to the nuclear hormone receptor family. NR0 subfamily. In terms of assembly, homodimer. Interacts with NR5A1, NR5A2, NR0B2 and with COPS2. Interacts with ESRRB; represses ESRRB activity at the GATA6 promoter.

Its subcellular location is the nucleus. It localises to the cytoplasm. Its function is as follows. Nuclear receptor that lacks a DNA-binding domain and acts as a corepressor that inhibits the transcriptional activity of other nuclear receptors through heterodimeric interactions. Component of a cascade required for the development of the hypothalamic-pituitary-adrenal-gonadal axis. May also have a role in the development of the embryo and in the maintenance of embryonic stem cell pluripotency. The polypeptide is Nuclear receptor subfamily 0 group B member 1 (NR0B1) (Macaca mulatta (Rhesus macaque)).